The following is a 268-amino-acid chain: Ribosomal RNA small subunit methyltransferase A (268 aa).

Positions 23, 25, 50, 72, 97, and 116 each coordinate S-adenosyl-L-methionine.

It belongs to the class I-like SAM-binding methyltransferase superfamily. rRNA adenine N(6)-methyltransferase family. RsmA subfamily.

It is found in the cytoplasm. The catalysed reaction is adenosine(1518)/adenosine(1519) in 16S rRNA + 4 S-adenosyl-L-methionine = N(6)-dimethyladenosine(1518)/N(6)-dimethyladenosine(1519) in 16S rRNA + 4 S-adenosyl-L-homocysteine + 4 H(+). Its function is as follows. Specifically dimethylates two adjacent adenosines (A1518 and A1519) in the loop of a conserved hairpin near the 3'-end of 16S rRNA in the 30S particle. May play a critical role in biogenesis of 30S subunits. The polypeptide is Ribosomal RNA small subunit methyltransferase A (Rickettsia bellii (strain OSU 85-389)).